The sequence spans 385 residues: Exopolygalacturonase rpg16 (385 aa).

The signal sequence occupies residues 1-26 (MVRFTSFTSPFSAILLLSFGINKVAT). N-linked (GlcNAc...) asparagine glycans are attached at residues Asn-143, Asn-161, Asn-164, and Asn-180. Residues 165 to 195 (STNLLLHDFIIHTVSNNSNPAKNTDALDLYH) form a PbH1 1 repeat. Catalysis depends on Asp-210, which acts as the Proton donor. Cysteines 212 and 229 form a disulfide. N-linked (GlcNAc...) asparagine glycans are attached at residues Asn-218 and Asn-226. PbH1 repeat units follow at residues 219–241 (VTKVTVSNITCRGGHGYSIGSLG), 249–270 (VTQVNVYNSTCIDCQNGVRVKT), and 278–299 (VEDINFTDIYLEKAENPIIITT). His-233 is an active-site residue. 3 N-linked (GlcNAc...) asparagine glycosylation sites follow: Asn-256, Asn-282, and Asn-343. Residues Cys-344 and Cys-350 are joined by a disulfide bond. The PbH1 5 repeat unit spans residues 350 to 376 (CSDVTLTNINISKASNNTKNVCVNLKG). N-linked (GlcNAc...) asparagine glycosylation is found at Asn-359 and Asn-365.

This sequence belongs to the glycosyl hydrolase 28 family. In terms of processing, N-glycosylated.

It is found in the secreted. The catalysed reaction is [(1-&gt;4)-alpha-D-galacturonosyl](n) + H2O = alpha-D-galacturonate + [(1-&gt;4)-alpha-D-galacturonosyl](n-1). Its function is as follows. Specific in hydrolyzing the terminal glycosidic bond of polygalacturonic acid and oligogalacturonates. In Rhizopus delemar (strain RA 99-880 / ATCC MYA-4621 / FGSC 9543 / NRRL 43880) (Mucormycosis agent), this protein is Exopolygalacturonase rpg16.